We begin with the raw amino-acid sequence, 113 residues long: MLTGVLVLKSAALFVLAALLEIGGAWLVWQGVREHRGWIWAGAGVIALGAYGFVAAFQPDAHFGRILAAYGGVFVAGSLLWGVVVDGFRPDRWDLTGALVCLVGVGLIMYAPR.

4 helical membrane-spanning segments follow: residues 12 to 32, 37 to 57, 66 to 86, and 92 to 112; these read ALFVLAALLEIGGAWLVWQGV, GWIWAGAGVIALGAYGFVAAF, ILAAYGGVFVAGSLLWGVVVD, and RWDLTGALVCLVGVGLIMYAP.

It belongs to the UPF0060 family.

It is found in the cell membrane. This is UPF0060 membrane protein Mmcs_2513 from Mycobacterium sp. (strain MCS).